The following is a 656-amino-acid chain: CoB--CoM heterodisulfide reductase iron-sulfur subunit A 2 (656 aa).

Position 152–175 (152–175) interacts with FAD; that stretch reads GGGVSGIQAALDLADMGFEVILVE. 4 4Fe-4S ferredoxin-type domains span residues 238 to 269, 286 to 315, 577 to 606, and 610 to 639; these read KKPR…FDEG, SVFT…FDQE, IVSE…LVEK, and LVAE…QNHF. [4Fe-4S] cluster contacts are provided by Cys-248, Cys-251, Cys-254, Cys-258, Cys-295, Cys-298, Cys-301, Cys-305, Cys-586, Cys-589, Cys-592, Cys-596, Cys-619, Cys-622, Cys-625, and Cys-629.

The protein belongs to the HdrA family. The ferredoxin:CoB-CoM heterodisulfide reductase is composed of three subunits; HdrA, HdrB and HdrC. It depends on [4Fe-4S] cluster as a cofactor. Requires FAD as cofactor.

It participates in cofactor metabolism; coenzyme M-coenzyme B heterodisulfide reduction; coenzyme B and coenzyme M from coenzyme M-coenzyme B heterodisulfide: step 1/1. Its function is as follows. Part of a complex that catalyzes the reversible reduction of CoM-S-S-CoB to the thiol-coenzymes H-S-CoM (coenzyme M) and H-S-CoB (coenzyme B). This is CoB--CoM heterodisulfide reductase iron-sulfur subunit A 2 (hdrA2) from Methanopyrus kandleri (strain AV19 / DSM 6324 / JCM 9639 / NBRC 100938).